Reading from the N-terminus, the 213-residue chain is Ras-related protein Rab-4A (213 aa).

Glycine 18, threonine 19, glycine 20, lysine 21, serine 22, cysteine 23, serine 37, histidine 39, and threonine 40 together coordinate GTP. A Mg(2+)-binding site is contributed by serine 22. The Switch 1 signature appears at 39 to 44 (HTIGVE). Mg(2+)-binding residues include threonine 40 and aspartate 63. The Switch 2 motif lies at 65–74 (AGQERFRSVT). The GTP site is built by glycine 66, asparagine 121, lysine 122, aspartate 124, alanine 152, and leucine 153. Residues cysteine 211 and cysteine 213 are each lipidated (S-geranylgeranyl cysteine). Cysteine 213 bears the Cysteine methyl ester mark.

It belongs to the small GTPase superfamily. Rab family. Mg(2+) is required as a cofactor.

The protein resides in the membrane. Its subcellular location is the cytoplasm. It localises to the early endosome membrane. It is found in the recycling endosome membrane. It catalyses the reaction GTP + H2O = GDP + phosphate + H(+). Regulated by guanine nucleotide exchange factors (GEFs) which promote the exchange of bound GDP for free GTP. Regulated by GTPase activating proteins (GAPs) which increase the GTP hydrolysis activity. Inhibited by GDP dissociation inhibitors (GDIs). In terms of biological role, the small GTPases Rab are key regulators of intracellular membrane trafficking, from the formation of transport vesicles to their fusion with membranes. Rabs cycle between an inactive GDP-bound form and an active GTP-bound form that is able to recruit to membranes different sets of downstream effectors directly responsible for vesicle formation, movement, tethering and fusion. RAB4A is involved in protein transport. Also plays a role in vesicular traffic. Mediates VEGFR2 endosomal trafficking to enhance VEGFR2 signaling. Acts as a regulator of platelet alpha-granule release during activation and aggregation of platelets. The protein is Ras-related protein Rab-4A (rab4a) of Danio rerio (Zebrafish).